Here is a 399-residue protein sequence, read N- to C-terminus: uncharacterized protein (399 aa).

Residues 197 to 206 (ENSSASSVTS) are compositionally biased toward polar residues. The tract at residues 197–224 (ENSSASSVTSEECEQDVMDEQSAEDNEE) is disordered. Over residues 207–224 (EECEQDVMDEQSAEDNEE) the composition is skewed to acidic residues.

This is an uncharacterized protein from Diadromus pulchellus (Parasitic wasp).